Consider the following 41-residue polypeptide: Fibrinogen beta chain (41 aa).

A disordered region spans residues 1 to 41 (ADDYDDEVLPDARGHRPIDRKREELPSLRPAPPPISGGGYR). Tyrosine 4 bears the Sulfotyrosine mark. Residues 10–26 (PDARGHRPIDRKREELP) show a composition bias toward basic and acidic residues. Residues 14–16 (GHR) are beta-chain polymerization, binding distal domain of another fibrin.

As to quaternary structure, heterohexamer; disulfide linked. Contains 2 sets of 3 non-identical chains (alpha, beta and gamma). The 2 heterotrimers are in head to head conformation with the N-termini in a small central domain. Conversion of fibrinogen to fibrin is triggered by thrombin, which cleaves fibrinopeptides A and B from alpha and beta chains, and thus exposes the N-terminal polymerization sites responsible for the formation of the soft clot.

It localises to the secreted. Functionally, cleaved by the protease thrombin to yield monomers which, together with fibrinogen alpha (FGA) and fibrinogen gamma (FGG), polymerize to form an insoluble fibrin matrix. Fibrin has a major function in hemostasis as one of the primary components of blood clots. In addition, functions during the early stages of wound repair to stabilize the lesion and guide cell migration during re-epithelialization. Was originally thought to be essential for platelet aggregation, based on in vitro studies using anticoagulated blood. However subsequent studies have shown that it is not absolutely required for thrombus formation in vivo. Enhances expression of SELP in activated platelets. Maternal fibrinogen is essential for successful pregnancy. Fibrin deposition is also associated with infection, where it protects against IFNG-mediated hemorrhage. May also facilitate the antibacterial immune response via both innate and T-cell mediated pathways. This Oryctolagus cuniculus (Rabbit) protein is Fibrinogen beta chain (FGB).